We begin with the raw amino-acid sequence, 116 residues long: Protein Wnt-5b (116 aa).

Serine 1 is lipidated: O-palmitoleoyl serine; by PORCN. N-linked (GlcNAc...) asparagine glycosylation is found at asparagine 69 and asparagine 83. A disulfide bridge connects residues cysteine 82 and cysteine 97.

Belongs to the Wnt family. In terms of processing, palmitoleoylation is required for efficient binding to frizzled receptors. Depalmitoleoylation leads to Wnt signaling pathway inhibition.

The protein resides in the secreted. It is found in the extracellular space. It localises to the extracellular matrix. Functionally, ligand for members of the frizzled family of seven transmembrane receptors. Probable developmental protein. May be a signaling molecule which affects the development of discrete regions of tissues. Is likely to signal over only few cell diameters. The polypeptide is Protein Wnt-5b (WNT-5B) (Plestiodon skiltonianus (Western skink)).